We begin with the raw amino-acid sequence, 593 residues long: UvrABC system protein C (593 aa).

The 78-residue stretch at 17 to 94 (MEPGCYLMKD…IKQYQPRYNI (78 aa)) folds into the GIY-YIG domain. The region spanning 199-234 (KTILKSLEERMLTASESLDFERAKEYRDLIQHIQNL) is the UVR domain.

This sequence belongs to the UvrC family. As to quaternary structure, interacts with UvrB in an incision complex.

The protein resides in the cytoplasm. Functionally, the UvrABC repair system catalyzes the recognition and processing of DNA lesions. UvrC both incises the 5' and 3' sides of the lesion. The N-terminal half is responsible for the 3' incision and the C-terminal half is responsible for the 5' incision. In Staphylococcus aureus (strain Mu3 / ATCC 700698), this protein is UvrABC system protein C.